A 666-amino-acid polypeptide reads, in one-letter code: Protein scarlet (666 aa).

The Cytoplasmic portion of the chain corresponds to 1–417; sequence MSDSDSKRID…TIQWLRFIQK (417 aa). The tract at residues 26-55 is disordered; that stretch reads PVGSTIEVPSLDSTPKLSKRNSSERSLPLR. The region spanning 69-316 is the ABC transporter domain; it reads LVWRDLCVYT…FANHGYYCPE (248 aa). 108-115 is an ATP binding site; it reads GSSGSGKT. Residues 418 to 438 traverse the membrane as a helical segment; that stretch reads IAMAFIIGACFAGTTEPSQLG. Residues 439–444 are Extracellular-facing; sequence VQAVQG. Residues 445 to 465 form a helical membrane-spanning segment; the sequence is ALFIMISENTYHPMYSVLNLF. At 466–490 the chain is on the cytoplasmic side; sequence PQGFPLFMRETRSGLYSTGQYYAAN. A helical transmembrane segment spans residues 491–511; the sequence is ILALLPGMIIEPLIFVIICYW. Residues 512 to 518 lie on the Extracellular side of the membrane; it reads LTGLRST. The helical transmembrane segment at 519-539 threads the bilayer; the sequence is FYAFGVTAMCVVLVMNVATAC. The Cytoplasmic segment spans residues 540-551; the sequence is GCFFSTAFNSVP. Residues 552–572 form a helical membrane-spanning segment; it reads LAMAYLVPLDYIFMITSGIFI. The Extracellular portion of the chain corresponds to 573 to 639; that stretch reads QVNSLPVAFW…YSFNESNVYR (67 aa). N-linked (GlcNAc...) asparagine glycosylation is found at N607 and N633. A helical transmembrane segment spans residues 640–660; that stretch reads NLLAMVGLYFGFHLLGYYCLW. At 661 to 666 the chain is on the cytoplasmic side; it reads RRARKL.

It belongs to the ABC transporter superfamily. ABCG family. Eye pigment precursor importer (TC 3.A.1.204) subfamily. In terms of assembly, may form a heterodimer with w/white. As to expression, expressed in the eye, specifically in primary pigment cells, secondary pigment cells and retinula cells (at protein level).

Its subcellular location is the cytoplasmic vesicle membrane. The catalysed reaction is L-kynurenine(out) + ATP + H2O = L-kynurenine(in) + ADP + phosphate + H(+). Its function is as follows. ATP-dependent transporter of the ATP-binding cassette (ABC) family which transports various molecules including bioamines, neurotransmitters and metabolic intermediates. In the eye and probably in association with w/white, required for the transport of the eye brown pigment precursors, kynurenine and probably tryptophan, into pigment cell granules. In Malpighian tubules and pupal eyes, involved in kynurenine transport. Probably in association with w/white, plays a role in zinc storage granule biogenesis in Malpighian tubule principal epithelial cells. The protein is Protein scarlet of Drosophila melanogaster (Fruit fly).